A 109-amino-acid chain; its full sequence is CRISPR-associated endoribonuclease Cas2 (109 aa).

A Mg(2+)-binding site is contributed by Asp-8.

The protein belongs to the CRISPR-associated endoribonuclease Cas2 protein family. Homodimer, forms a heterotetramer with a Cas1 homodimer. Mg(2+) serves as cofactor.

In terms of biological role, CRISPR (clustered regularly interspaced short palindromic repeat), is an adaptive immune system that provides protection against mobile genetic elements (viruses, transposable elements and conjugative plasmids). CRISPR clusters contain sequences complementary to antecedent mobile elements and target invading nucleic acids. CRISPR clusters are transcribed and processed into CRISPR RNA (crRNA). Functions as a ssRNA-specific endoribonuclease. Involved in the integration of spacer DNA into the CRISPR cassette. The chain is CRISPR-associated endoribonuclease Cas2 from Streptococcus mutans serotype c (strain ATCC 700610 / UA159).